We begin with the raw amino-acid sequence, 756 residues long: Ribosomal RNA large subunit methyltransferase K/L (756 aa).

One can recognise a THUMP domain in the interval 46-157; it reads TAYRLCLWSR…RGEAILSLDL (112 aa). The span at 395 to 409 shows a compositional bias: basic and acidic residues; sequence ERRTPEQRQAEREQA. A disordered region spans residues 395–441; it reads ERRTPEQRQAEREQAAYDQTPNEPQERKFNKNGNPIKPTPAPAPVIE.

It belongs to the methyltransferase superfamily. RlmKL family.

It is found in the cytoplasm. The catalysed reaction is guanosine(2445) in 23S rRNA + S-adenosyl-L-methionine = N(2)-methylguanosine(2445) in 23S rRNA + S-adenosyl-L-homocysteine + H(+). It catalyses the reaction guanosine(2069) in 23S rRNA + S-adenosyl-L-methionine = N(2)-methylguanosine(2069) in 23S rRNA + S-adenosyl-L-homocysteine + H(+). Functionally, specifically methylates the guanine in position 2445 (m2G2445) and the guanine in position 2069 (m7G2069) of 23S rRNA. In Pseudomonas fluorescens (strain Pf0-1), this protein is Ribosomal RNA large subunit methyltransferase K/L.